The following is a 144-amino-acid chain: Cytochrome c oxidase subunit 4 isoform 1, mitochondrial (144 aa).

Residues 1 to 73 (SVVKSEDFSL…SFAEMNRGSN (73 aa)) are Mitochondrial matrix-facing. An N6-acetyllysine; alternate modification is found at lysine 4. Position 4 is an N6-succinyllysine; alternate (lysine 4). At lysine 28 the chain carries N6-acetyllysine. Residues serine 31 and serine 33 each carry the phosphoserine modification. Lysine 35 is modified (N6-acetyllysine; alternate). N6-succinyllysine; alternate is present on lysine 35. Position 42 is an N6-acetyllysine (lysine 42). The chain crosses the membrane as a helical span at residues 74-99 (EWKTVVGGAMFFIGFTALIIMWQKRH). Residues 100–144 (VYGPLPQSFDKEWVAKQTKRMLDMKVNPIQGLASKWDYEKNEWKK) are Mitochondrial intermembrane-facing.

This sequence belongs to the cytochrome c oxidase IV family. In terms of assembly, component of the cytochrome c oxidase (complex IV, CIV), a multisubunit enzyme composed of 14 subunits. The complex is composed of a catalytic core of 3 subunits MT-CO1, MT-CO2 and MT-CO3, encoded in the mitochondrial DNA, and 11 supernumerary subunits COX4I, COX5A, COX5B, COX6A, COX6B, COX6C, COX7A, COX7B, COX7C, COX8 and NDUFA4, which are encoded in the nuclear genome. The complex exists as a monomer or a dimer and forms supercomplexes (SCs) in the inner mitochondrial membrane with NADH-ubiquinone oxidoreductase (complex I, CI) and ubiquinol-cytochrome c oxidoreductase (cytochrome b-c1 complex, complex III, CIII), resulting in different assemblies (supercomplex SCI(1)III(2)IV(1) and megacomplex MCI(2)III(2)IV(2)). Interacts with PHB2; the interaction decreases in absence of SPHK2. Interacts with AFG1L. Interacts with ABCB7; this interaction allows the regulation of cellular iron homeostasis and cellular reactive oxygen species (ROS) levels in cardiomyocytes. Interacts with FLVCR2; this interaction occurs in the absence of heme and is disrupted upon heme binding. Interacts with IRGC.

The protein localises to the mitochondrion inner membrane. It participates in energy metabolism; oxidative phosphorylation. In terms of biological role, component of the cytochrome c oxidase, the last enzyme in the mitochondrial electron transport chain which drives oxidative phosphorylation. The respiratory chain contains 3 multisubunit complexes succinate dehydrogenase (complex II, CII), ubiquinol-cytochrome c oxidoreductase (cytochrome b-c1 complex, complex III, CIII) and cytochrome c oxidase (complex IV, CIV), that cooperate to transfer electrons derived from NADH and succinate to molecular oxygen, creating an electrochemical gradient over the inner membrane that drives transmembrane transport and the ATP synthase. Cytochrome c oxidase is the component of the respiratory chain that catalyzes the reduction of oxygen to water. Electrons originating from reduced cytochrome c in the intermembrane space (IMS) are transferred via the dinuclear copper A center (CU(A)) of subunit 2 and heme A of subunit 1 to the active site in subunit 1, a binuclear center (BNC) formed by heme A3 and copper B (CU(B)). The BNC reduces molecular oxygen to 2 water molecules using 4 electrons from cytochrome c in the IMS and 4 protons from the mitochondrial matrix. The sequence is that of Cytochrome c oxidase subunit 4 isoform 1, mitochondrial (COX4I1) from Pongo pygmaeus (Bornean orangutan).